The sequence spans 286 residues: Orotidine 5'-phosphate decarboxylase (286 aa).

Residues Asp-35, 57–59 (KTH), 89–98 (DRKFADIGNT), Tyr-239, and Arg-257 contribute to the substrate site. The active-site Proton donor is the Lys-91.

This sequence belongs to the OMP decarboxylase family.

The enzyme catalyses orotidine 5'-phosphate + H(+) = UMP + CO2. The protein operates within pyrimidine metabolism; UMP biosynthesis via de novo pathway; UMP from orotate: step 2/2. This is Orotidine 5'-phosphate decarboxylase (URA3) from Yarrowia lipolytica (strain CLIB 122 / E 150) (Yeast).